Reading from the N-terminus, the 200-residue chain is Transcription factor FapR (200 aa).

The protein belongs to the FapR family.

Functionally, transcriptional factor involved in regulation of membrane lipid biosynthesis by repressing genes involved in fatty acid and phospholipid metabolism. The sequence is that of Transcription factor FapR from Thermoanaerobacter pseudethanolicus (strain ATCC 33223 / 39E) (Clostridium thermohydrosulfuricum).